Reading from the N-terminus, the 153-residue chain is uncharacterized protein (153 aa).

The first 18 residues, 1 to 18, serve as a signal peptide directing secretion; sequence MSARISKQLRLSVPPCLA. N-linked (GlcNAc...) asparagine glycosylation is found at Asn19 and Asn25. The Extracellular portion of the chain corresponds to 19–43; that stretch reads NRTTASNSSSCVTEVEPLLQSFSST. The chain crosses the membrane as a helical span at residues 44 to 64; sequence LVLIVLATVIFCLVVLSLSTF. Over 65-153 the chain is Cytoplasmic; sequence HMHKSKMKKR…EHLQQSVVLS (89 aa). Positions 75–115 are disordered; that stretch reads KIEKAQEEYERDHCSPKAERGHLHGMGRGGTHGSPTSPTIQ. Over residues 77–96 the composition is skewed to basic and acidic residues; that stretch reads EKAQEEYERDHCSPKAERGH.

The protein resides in the membrane. This is an uncharacterized protein from Xenopus tropicalis (Western clawed frog).